Consider the following 466-residue polypeptide: ATP synthase subunit beta (466 aa).

G153–T160 serves as a coordination point for ATP.

It belongs to the ATPase alpha/beta chains family. F-type ATPases have 2 components, CF(1) - the catalytic core - and CF(0) - the membrane proton channel. CF(1) has five subunits: alpha(3), beta(3), gamma(1), delta(1), epsilon(1). CF(0) has three main subunits: a(1), b(2) and c(9-12). The alpha and beta chains form an alternating ring which encloses part of the gamma chain. CF(1) is attached to CF(0) by a central stalk formed by the gamma and epsilon chains, while a peripheral stalk is formed by the delta and b chains.

It is found in the cell membrane. It carries out the reaction ATP + H2O + 4 H(+)(in) = ADP + phosphate + 5 H(+)(out). Functionally, produces ATP from ADP in the presence of a proton gradient across the membrane. The catalytic sites are hosted primarily by the beta subunits. This is ATP synthase subunit beta from Oenococcus oeni (strain ATCC BAA-331 / PSU-1).